A 530-amino-acid polypeptide reads, in one-letter code: T-box transcription factor TBX21 (530 aa).

A disordered region spans residues 1–55 (MGIVEPGCGDMLTGTEPMPSDEGRGPGADQQHRFFYPEPGAQDPTDRRAGSSLGT). S52 is modified (phosphoserine). Residue T55 is modified to Phosphothreonine. A phosphotyrosine mark is found at Y76 and Y117. Positions 140–325 (LSNHLLWSKF…NNPFAKGFRE (186 aa)) form a DNA-binding region, T-box. Y219 bears the Phosphotyrosine; by ABL1 mark. S224 bears the Phosphoserine mark. Y265 carries the post-translational modification Phosphotyrosine; by ABL1. Phosphothreonine is present on T302. Y304 is modified (phosphotyrosine; by ABL1). K313 is covalently cross-linked (Glycyl lysine isopeptide (Lys-Gly) (interchain with G-Cter in ubiquitin)). Residues 444–530 (AGWFRPMRTL…EGQFYNYFPN (87 aa)) form a disordered region. Over residues 462 to 482 (SEEQGSSPSLWPEVTSLQPEP) the composition is skewed to polar residues. A compositionally biased stretch (low complexity) spans 498-515 (SPYPSSGDSSSPAGAPSP). S508 bears the Phosphoserine mark. A Phosphotyrosine; by ITK modification is found at Y525.

Interacts with RUNX1 and RUNX3. Interacts with ITK. The phosphorylated form (at Tyr-525) interacts with GATA3. Interacts with ABL1. Interacts with RELA. The phosphorylated form (at Thr-302) interacts with NFATC2. Interacts with KDM6B. Interacts with SMARCA4 in a KDM6B-dependent manner. Interacts with CCTN1 and CDK9. Interacts with USP10. Phosphorylations at Ser-52, Tyr-76, Ser-224 and Ser-508 are regulated by mTORC1. Phosphorylation at Tyr-525 is essential for its interaction GATA3. Phosphorylation at Tyr-219, Tyr-265 and Tyr-304 enhances its transcriptional activator activity. Phosphorylation at Thr-302 is required for its interaction with NFATC2. Post-translationally, ubiquitinated at Lys-313, leading to its degradation by the proteasome. Ubiquitination is essential for controlling protein stability, binding to the T-box-binding element of the IFN-gamma promoter, and for interaction with NFATC2 through induction of phosphorylation at Thr-302. Deubiquitinated by USP10 leading to its stabilization. In terms of tissue distribution, T-cell specific. Expressed in regulatory T (TReg) cells.

The protein localises to the nucleus. Functionally, lineage-defining transcription factor which initiates Th1 lineage development from naive Th precursor cells both by activating Th1 genetic programs and by repressing the opposing Th2 and Th17 genetic programs. Activates transcription of a set of genes important for Th1 cell function, including those encoding IFN-gamma and the chemokine receptor CXCR3. Activates IFNG and CXCR3 genes in part by recruiting chromatin remodeling complexes including KDM6B, a SMARCA4-containing SWI/SNF-complex, and an H3K4me2-methyltransferase complex to their promoters and all of these complexes serve to establish a more permissive chromatin state conducive with transcriptional activation. Can activate Th1 genes also via recruitment of Mediator complex and P-TEFb (composed of CDK9 and CCNT1/cyclin-T1) in the form of the super elongation complex (SEC) to super-enhancers and associated genes in activated Th1 cells. Inhibits the Th17 cell lineage commitment by blocking RUNX1-mediated transactivation of Th17 cell-specific transcriptinal regulator RORC. Inhibits the Th2 cell lineage commitment by suppressing the production of Th2 cytokines, such as IL-4, IL-5, and IL- 13, via repression of transcriptional regulators GATA3 and NFATC2. Protects Th1 cells from amplifying aberrant type-I IFN response in an IFN-gamma abundant microenvironment by acting as a repressor of type-I IFN transcription factors and type-I IFN- stimulated genes. Acts as a regulator of antiviral B-cell responses; controls chronic viral infection by promoting the antiviral antibody IgG2a isotype switching and via regulation of a broad antiviral gene expression program. This is T-box transcription factor TBX21 (Tbx21) from Mus musculus (Mouse).